Consider the following 431-residue polypeptide: Peroxisomal biogenesis factor 3 (431 aa).

Topologically, residues Met-1 to Lys-10 are peroxisomal. Residues Val-11–Val-28 traverse the membrane as a helical segment. The Cytoplasmic portion of the chain corresponds to Lys-29 to Leu-431. Residues Thr-95 to Glu-126 form a disordered region. Polar residues predominate over residues Gln-112–Ala-121.

This sequence belongs to the peroxin-3 family.

The protein resides in the peroxisome membrane. Involved in peroxisome biosynthesis. Seems to directly or indirectly sequesters components of the peroxisome biogenesis machinery. This chain is Peroxisomal biogenesis factor 3 (PEX3), found in Yarrowia lipolytica (strain CLIB 122 / E 150) (Yeast).